A 146-amino-acid polypeptide reads, in one-letter code: MLSQEFFNSFITIYRPYLKLTEPILEKHNIYYGQWLILRDIAKHQPTTLIEISHRRAIEKPTARKTLKALIENDLITVENSLEDKRQKFLTLTPKGHELYEIVCLDVQKLQQAVVAKTNISQDQMQETINVMNQIHEILLKEAHND.

The HTH marR-type domain maps to 1-137; the sequence is MLSQEFFNSF…TINVMNQIHE (137 aa).

This is an uncharacterized protein from Staphylococcus aureus (strain MRSA252).